A 485-amino-acid chain; its full sequence is Aspartyl/glutamyl-tRNA(Asn/Gln) amidotransferase subunit B (485 aa).

This sequence belongs to the GatB/GatE family. GatB subfamily. Heterotrimer of A, B and C subunits.

The catalysed reaction is L-glutamyl-tRNA(Gln) + L-glutamine + ATP + H2O = L-glutaminyl-tRNA(Gln) + L-glutamate + ADP + phosphate + H(+). It carries out the reaction L-aspartyl-tRNA(Asn) + L-glutamine + ATP + H2O = L-asparaginyl-tRNA(Asn) + L-glutamate + ADP + phosphate + 2 H(+). Functionally, allows the formation of correctly charged Asn-tRNA(Asn) or Gln-tRNA(Gln) through the transamidation of misacylated Asp-tRNA(Asn) or Glu-tRNA(Gln) in organisms which lack either or both of asparaginyl-tRNA or glutaminyl-tRNA synthetases. The reaction takes place in the presence of glutamine and ATP through an activated phospho-Asp-tRNA(Asn) or phospho-Glu-tRNA(Gln). The sequence is that of Aspartyl/glutamyl-tRNA(Asn/Gln) amidotransferase subunit B from Gluconobacter oxydans (strain 621H) (Gluconobacter suboxydans).